The sequence spans 133 residues: Inhibitor of g-type lysozyme (133 aa).

The N-terminal stretch at 1 to 22 is a signal peptide; the sequence is MKIKSIRKAVLLLALLTSTSFA.

It localises to the periplasm. Functionally, inhibits activity of g-type lysozyme, which confers increased lysozyme tolerance to the bacterium. The protein is Inhibitor of g-type lysozyme (pliG) of Escherichia coli (strain K12).